We begin with the raw amino-acid sequence, 132 residues long: Agouti-related protein (132 aa).

Positions 1–20 (MLTAAVLSCALLLALPATRG) are cleaved as a signal peptide. Residues 21-82 (AQMGLAPMEG…VLDLQDREPR (62 aa)) constitute a propeptide that is removed on maturation. Intrachain disulfides connect cysteine 87–cysteine 102, cysteine 94–cysteine 108, cysteine 101–cysteine 119, cysteine 105–cysteine 129, and cysteine 110–cysteine 117. In terms of domain architecture, Agouti spans 87 to 129 (CVRLHESCLGQQVPCCDPCATCYCRFFNAFCYCRKLGTAMNPC). The interval 111-113 (RFF) is interaction with melanocortin receptors.

Interacts with melanocortin receptors MC3R, MC4R and MC5R. Expressed primarily in the adrenal gland, subthalamic nucleus, and hypothalamus, with a lower level of expression occurring in testis, lung, and kidney.

Its subcellular location is the secreted. It localises to the golgi apparatus lumen. Its function is as follows. Plays a role in weight homeostasis. Involved in the control of feeding behavior through the central melanocortin system. Acts as alpha melanocyte-stimulating hormone antagonist by inhibiting cAMP production mediated by stimulation of melanocortin receptors within the hypothalamus and adrenal gland. Has very low activity with MC5R. Is an inverse agonist for MC3R and MC4R being able to suppress their constitutive activity. It promotes MC3R and MC4R endocytosis in an arrestin-dependent manner. In Homo sapiens (Human), this protein is Agouti-related protein (AGRP).